A 333-amino-acid polypeptide reads, in one-letter code: Transmembrane protein I329L (333 aa).

Residues 1 to 31 form the signal peptide; that stretch reads MLRVFIFFVFLGSGLTGRIKPQITCKYFISE. Residues N32, N39, N44, N76, N82, and N101 are each glycosylated (N-linked (GlcNAc...) asparagine; by host). The Extracellular segment spans residues 32 to 239; the sequence is NNTWYKYNVT…NTERYKSCYP (208 aa). One copy of the LRR repeat lies at 112–133; it reads ELKFLDLRYNDLQVIEYNILRK. N-linked (GlcNAc...) asparagine; by host glycosylation is found at N181, N185, and N219. A disulfide bridge connects residues C195 and C237. The chain crosses the membrane as a helical span at residues 240–260; the sequence is LVFISILCSCISFLFLFICLL. The Cytoplasmic segment spans residues 261–333; sequence RSICKKYSCT…EKKVSCSRRK (73 aa).

It belongs to the asfivirus I329L family. In terms of processing, highly glycosylated.

The protein resides in the host endoplasmic reticulum membrane. Its subcellular location is the host Golgi apparatus membrane. Functionally, viral TLR3 homolog that probably prevents TLR3 dimerization and subsequent induction of IFN. Inhibits dsRNA-stimulated activation of NF-kB and IRF3. The protein is Transmembrane protein I329L of Ornithodoros (relapsing fever ticks).